The following is a 155-amino-acid chain: Ribosome maturation factor RimP (155 aa).

This sequence belongs to the RimP family.

It localises to the cytoplasm. In terms of biological role, required for maturation of 30S ribosomal subunits. This is Ribosome maturation factor RimP from Prochlorococcus marinus (strain MIT 9515).